Reading from the N-terminus, the 316-residue chain is Beta-ketoacyl-[acyl-carrier-protein] synthase III (316 aa).

Catalysis depends on residues Cys-112 and His-243. Residues 244 to 248 (QANLR) form an ACP-binding region. Asn-273 is an active-site residue.

This sequence belongs to the thiolase-like superfamily. FabH family. Homodimer.

The protein resides in the cytoplasm. It carries out the reaction malonyl-[ACP] + acetyl-CoA + H(+) = 3-oxobutanoyl-[ACP] + CO2 + CoA. It functions in the pathway lipid metabolism; fatty acid biosynthesis. Its function is as follows. Catalyzes the condensation reaction of fatty acid synthesis by the addition to an acyl acceptor of two carbons from malonyl-ACP. Catalyzes the first condensation reaction which initiates fatty acid synthesis and may therefore play a role in governing the total rate of fatty acid production. Possesses both acetoacetyl-ACP synthase and acetyl transacylase activities. Its substrate specificity determines the biosynthesis of branched-chain and/or straight-chain of fatty acids. This Yersinia pestis (strain Pestoides F) protein is Beta-ketoacyl-[acyl-carrier-protein] synthase III.